Reading from the N-terminus, the 301-residue chain is Isonocardicin synthase (301 aa).

Monomer.

It catalyses the reaction nocardicin G + S-adenosyl-L-methionine = isonocardicin C + S-methyl-5'-thioadenosine + H(+). The enzyme catalyses nocardicin E + S-adenosyl-L-methionine = isonocardicin A + S-methyl-5'-thioadenosine + H(+). It functions in the pathway antibiotic biosynthesis. Functionally, involved in the biosynthesis of the beta-lactam antibiotic nocardicin A. In the presence of S-adenosyl-L-methionine (AdoMet), catalyzes the transfer of a 3-amino-3-carboxypropyl group from AdoMet to nocardicin G, forming isonocardicin C. Can also catalyze the transformation of nocardicin E and F to isonocardicin A and B, respectively, but in vivo substrate is probably nocardicin G. This is Isonocardicin synthase from Nocardia uniformis subsp. tsuyamanensis.